A 415-amino-acid chain; its full sequence is Dynein assembly factor with WD repeat domains 1 (415 aa).

WD repeat units lie at residues 90–129 (AHIL…ELNT), 132–174 (GHRN…HTFR), 175–214 (GHTA…EVCT), 217–256 (GHSA…KVNI), 259–298 (GHCA…CVAT), 301–340 (GHDD…CIAK), 343–384 (GHEG…QVLE), and 386–415 (HTDE…RIWR).

This sequence belongs to the WD repeat WDR69 family. Interacts with IFT46.

The protein localises to the cytoplasm. The protein resides in the cytoskeleton. It localises to the flagellum basal body. Its subcellular location is the flagellum axoneme. Functionally, required for axonemal dynein assembly and ciliary motility in ciliated organs, including Kupffer's vesicle, during embryogenesis. Facilitates the onset of robust cilia motility during development. The sequence is that of Dynein assembly factor with WD repeat domains 1 (DAW1) from Macaca fascicularis (Crab-eating macaque).